Consider the following 607-residue polypeptide: UvrABC system protein C (607 aa).

One can recognise a GIY-YIG domain in the interval 29–106 (DKPGVYLMKD…IKKHNPKYNI (78 aa)). Positions 211–246 (GAILKALEKKMKEASENLEFERAKEYRDLMEDLKKV) constitute a UVR domain.

It belongs to the UvrC family. In terms of assembly, interacts with UvrB in an incision complex.

The protein localises to the cytoplasm. In terms of biological role, the UvrABC repair system catalyzes the recognition and processing of DNA lesions. UvrC both incises the 5' and 3' sides of the lesion. The N-terminal half is responsible for the 3' incision and the C-terminal half is responsible for the 5' incision. The chain is UvrABC system protein C from Desulfitobacterium hafniense (strain Y51).